The chain runs to 471 residues: Cysteine--tRNA ligase (471 aa).

Cys-30 contributes to the Zn(2+) binding site. Residues 32 to 42 carry the 'HIGH' region motif; sequence PTVYNFAHIGN. The Zn(2+) site is built by Cys-212, His-237, and Glu-241. The 'KMSKS' region motif lies at 270 to 274; that stretch reads KMSKS. Residue Lys-273 participates in ATP binding.

Belongs to the class-I aminoacyl-tRNA synthetase family. In terms of assembly, monomer. Zn(2+) serves as cofactor.

Its subcellular location is the cytoplasm. The enzyme catalyses tRNA(Cys) + L-cysteine + ATP = L-cysteinyl-tRNA(Cys) + AMP + diphosphate. The polypeptide is Cysteine--tRNA ligase (Leptospira interrogans serogroup Icterohaemorrhagiae serovar copenhageni (strain Fiocruz L1-130)).